Here is a 78-residue protein sequence, read N- to C-terminus: Large ribosomal subunit protein bL28 (78 aa).

Residues 1–21 form a disordered region; the sequence is MSRVCQVTGKRPVSGNNRSHA.

It belongs to the bacterial ribosomal protein bL28 family.

The polypeptide is Large ribosomal subunit protein bL28 (Serratia proteamaculans (strain 568)).